The sequence spans 105 residues: Small ribosomal subunit protein uS10 (105 aa).

Belongs to the universal ribosomal protein uS10 family. In terms of assembly, part of the 30S ribosomal subunit.

In terms of biological role, involved in the binding of tRNA to the ribosomes. This chain is Small ribosomal subunit protein uS10, found in Chlamydia pneumoniae (Chlamydophila pneumoniae).